A 260-amino-acid polypeptide reads, in one-letter code: Ubiquinone/menaquinone biosynthesis C-methyltransferase UbiE (260 aa).

Residues Thr83, Asp104, and 132–133 (NA) each bind S-adenosyl-L-methionine.

This sequence belongs to the class I-like SAM-binding methyltransferase superfamily. MenG/UbiE family.

The catalysed reaction is a 2-demethylmenaquinol + S-adenosyl-L-methionine = a menaquinol + S-adenosyl-L-homocysteine + H(+). It catalyses the reaction a 2-methoxy-6-(all-trans-polyprenyl)benzene-1,4-diol + S-adenosyl-L-methionine = a 5-methoxy-2-methyl-3-(all-trans-polyprenyl)benzene-1,4-diol + S-adenosyl-L-homocysteine + H(+). It functions in the pathway quinol/quinone metabolism; menaquinone biosynthesis; menaquinol from 1,4-dihydroxy-2-naphthoate: step 2/2. The protein operates within cofactor biosynthesis; ubiquinone biosynthesis. Its function is as follows. Methyltransferase required for the conversion of demethylmenaquinol (DMKH2) to menaquinol (MKH2) and the conversion of 2-polyprenyl-6-methoxy-1,4-benzoquinol (DDMQH2) to 2-polyprenyl-3-methyl-6-methoxy-1,4-benzoquinol (DMQH2). The protein is Ubiquinone/menaquinone biosynthesis C-methyltransferase UbiE of Bartonella tribocorum (strain CIP 105476 / IBS 506).